The following is a 676-amino-acid chain: DNA ligase (676 aa).

Residues 35-39 (DNEYD), 84-85 (SL), and Glu-115 each bind NAD(+). The N6-AMP-lysine intermediate role is filled by Lys-117. Residues Arg-138, Glu-177, Lys-294, and Lys-318 each coordinate NAD(+). Cys-412, Cys-415, Cys-430, and Cys-436 together coordinate Zn(2+). A BRCT domain is found at 595–676 (PTRQPLNGES…FLAFLAQYSA (82 aa)).

Belongs to the NAD-dependent DNA ligase family. LigA subfamily. Mg(2+) serves as cofactor. Mn(2+) is required as a cofactor.

The catalysed reaction is NAD(+) + (deoxyribonucleotide)n-3'-hydroxyl + 5'-phospho-(deoxyribonucleotide)m = (deoxyribonucleotide)n+m + AMP + beta-nicotinamide D-nucleotide.. Its function is as follows. DNA ligase that catalyzes the formation of phosphodiester linkages between 5'-phosphoryl and 3'-hydroxyl groups in double-stranded DNA using NAD as a coenzyme and as the energy source for the reaction. It is essential for DNA replication and repair of damaged DNA. This Acinetobacter baylyi (strain ATCC 33305 / BD413 / ADP1) protein is DNA ligase.